The sequence spans 453 residues: Asparagine--tRNA ligase (453 aa).

Belongs to the class-II aminoacyl-tRNA synthetase family. Homodimer.

It is found in the cytoplasm. It catalyses the reaction tRNA(Asn) + L-asparagine + ATP = L-asparaginyl-tRNA(Asn) + AMP + diphosphate + H(+). The sequence is that of Asparagine--tRNA ligase from Malacoplasma penetrans (strain HF-2) (Mycoplasma penetrans).